The chain runs to 173 residues: Shikimate kinase (173 aa).

14–19 (GAGKST) provides a ligand contact to ATP. Mg(2+) is bound at residue serine 18. 3 residues coordinate substrate: aspartate 36, arginine 60, and glycine 82. Arginine 120 contacts ATP. Arginine 140 provides a ligand contact to substrate. Residue glutamine 157 coordinates ATP.

This sequence belongs to the shikimate kinase family. Monomer. Requires Mg(2+) as cofactor.

The protein localises to the cytoplasm. The catalysed reaction is shikimate + ATP = 3-phosphoshikimate + ADP + H(+). It participates in metabolic intermediate biosynthesis; chorismate biosynthesis; chorismate from D-erythrose 4-phosphate and phosphoenolpyruvate: step 5/7. Its function is as follows. Catalyzes the specific phosphorylation of the 3-hydroxyl group of shikimic acid using ATP as a cosubstrate. This is Shikimate kinase from Buchnera aphidicola subsp. Schizaphis graminum (strain Sg).